Here is a 184-residue protein sequence, read N- to C-terminus: MAKICGIDEAGRGALAGPLSVAACVLNSEISGLNDSKKLTAKRREELFKKITKSSNFLIAYFSNAQIDELGLSECLRRALKLFKAHFESFEIIYDGNLDYGVGITTMIKADGKVAGVSAASILAKVSRDRLMNGWDKFYPAYGFAGHKGYGTKSHLDAIAKFGYSDFHRKSFVIKPKLAQSSLF.

An RNase H type-2 domain is found at Ala-2–Phe-184. Asp-8, Glu-9, and Asp-95 together coordinate a divalent metal cation.

Belongs to the RNase HII family. Requires Mn(2+) as cofactor. Mg(2+) serves as cofactor.

The protein localises to the cytoplasm. The enzyme catalyses Endonucleolytic cleavage to 5'-phosphomonoester.. In terms of biological role, endonuclease that specifically degrades the RNA of RNA-DNA hybrids. This is Ribonuclease HII from Campylobacter concisus (strain 13826).